Consider the following 209-residue polypeptide: Claudin-4 (209 aa).

Over 1-9 the chain is Cytoplasmic; the sequence is MASMGLQVT. Residues 1-103 are interaction with EPHA2; that stretch reads MASMGLQVTG…GVLLSVVGGK (103 aa). The helical transmembrane segment at 10-30 threads the bilayer; the sequence is GIALAVLGWLAVMLCCALPMW. Topologically, residues 31–81 are extracellular; sequence RVTAFIGSNIVTSQTIWEGLWMNCVVQSTGQMQCKVYDSLLALPQDLQAAR. C54 and C64 form a disulfide bridge. A helical membrane pass occupies residues 82 to 102; that stretch reads ALVIISIIVAALGVLLSVVGG. Residues 103 to 117 are Cytoplasmic-facing; sequence KCTNCLEDESAKAKT. A helical membrane pass occupies residues 118 to 138; the sequence is MIVAGVVFLLAGLLVIVPVSW. At 139-160 the chain is on the extracellular side; sequence TAHNIIQDFYNPLVASGQKREM. A helical membrane pass occupies residues 161 to 181; that stretch reads GASLYVGWAASGLLLLGGGLL. The Cytoplasmic segment spans residues 182 to 209; it reads CCNCPPRTDKPYSAKYSAARSAAASNYV. Phosphotyrosine; by EPHA2 is present on Y208. Positions 208 to 209 are interactions with TJP1, TJP2 and TJP3; sequence YV.

The protein belongs to the claudin family. Interacts with EPHA2; phosphorylates CLDN4 and may regulate tight junctions. Directly interacts with TJP1/ZO-1, TJP2/ZO-2 and TJP3/ZO-3. Interacts with CLDN1. Interacts with CLDN8. Post-translationally, phosphorylated. Phosphorylation by EPHA2 is stimulated by EFNA1 and alters interaction with TJP1.

The protein resides in the cell junction. It is found in the tight junction. It localises to the cell membrane. Its function is as follows. Channel-forming tight junction protein that mediates paracellular chloride transport in the kidney. Plays a critical role in the paracellular reabsorption of filtered chloride in the kidney collecting ducts. Claudins play a major role in tight junction-specific obliteration of the intercellular space, through calcium-independent cell-adhesion activity. This is Claudin-4 (CLDN4) from Chlorocebus aethiops (Green monkey).